Here is a 431-residue protein sequence, read N- to C-terminus: Probable pectate lyase 1 (431 aa).

A signal peptide spans 1-20; that stretch reads MAVLPTWLLAMMCLLFFVGA. Residues N23, N28, and N65 are each glycosylated (N-linked (GlcNAc...) asparagine). 3 residues coordinate Ca(2+): D227, D251, and D255. R307 is a catalytic residue.

It belongs to the polysaccharide lyase 1 family. Requires Ca(2+) as cofactor. Expressed in flowers, but not in leaves.

It catalyses the reaction Eliminative cleavage of (1-&gt;4)-alpha-D-galacturonan to give oligosaccharides with 4-deoxy-alpha-D-galact-4-enuronosyl groups at their non-reducing ends.. It participates in glycan metabolism; pectin degradation; 2-dehydro-3-deoxy-D-gluconate from pectin: step 2/5. The polypeptide is Probable pectate lyase 1 (Arabidopsis thaliana (Mouse-ear cress)).